The chain runs to 270 residues: MPGKHQHFQEPEVGCCGKYFLFGFNIVFWVLGALFLAIGLWAWGEKGVLSNISALTDLGGLDPVWLFVVVGGVMSVLGFAGCIGALRENTFLLKFFSVFLGLIFFLELATGILAFVFKDWIRDQLNLFINNNVKAYRDDIDLQNLIDFAQEYWSCCGARGPNDWNLNIYFNCTDLNPSRERCGVPFSCCVRDPAEDVLNTQCGYDVRLKLELEQQGFIHTKGCVGQFEKWLQDNLIVVAGVFMGIALLQIFGICLAQNLVSDIKAVKANW.

Over Met1–Tyr19 the chain is Cytoplasmic. A helical transmembrane segment spans residues Phe20–Leu40. At Trp41–Pro63 the chain is on the extracellular side. Residue Asn51 is glycosylated (N-linked (GlcNAc...) asparagine). Residues Val64–Gly84 traverse the membrane as a helical segment. Topologically, residues Ala85–Lys94 are cytoplasmic. The chain crosses the membrane as a helical span at residues Phe95–Phe115. The Extracellular segment spans residues Val116–Asn234. 4 cysteine pairs are disulfide-bonded: Cys155/Cys223, Cys156/Cys188, Cys172/Cys182, and Cys189/Cys202. N-linked (GlcNAc...) asparagine glycosylation occurs at Asn171. A helical transmembrane segment spans residues Leu235–Leu255. Residues Ala256–Trp270 lie on the Cytoplasmic side of the membrane.

It belongs to the tetraspanin (TM4SF) family. As to quaternary structure, interacts with ADAM10; the interaction influences ADAM10 substrate specificity, endocytosis and turnover.

Its subcellular location is the cell membrane. Part of TspanC8 subgroup, composed of 6 members that interact with the transmembrane metalloprotease ADAM10. This interaction is required for ADAM10 exit from the endoplasmic reticulum and for enzymatic maturation and trafficking to the cell surface as well as substrate specificity. Different TspanC8/ADAM10 complexes have distinct substrates. Seems to regulate VE-cadherin expression in endothelial cells probably through interaction with ADAM10, promoting leukocyte transmigration. This chain is Tetraspanin-17, found in Homo sapiens (Human).